A 299-amino-acid chain; its full sequence is Oxygen-dependent coproporphyrinogen-III oxidase (299 aa).

Serine 92 serves as a coordination point for substrate. 2 residues coordinate Mn(2+): histidine 96 and histidine 106. Histidine 106 (proton donor) is an active-site residue. 108 to 110 is a binding site for substrate; the sequence is NVR. 2 residues coordinate Mn(2+): histidine 145 and histidine 175. The interval 240–275 is important for dimerization; that stretch reads YVEFNLVWDRGTLFGLQTGGRTESILMSMPPLVRWE. A substrate-binding site is contributed by 258 to 260; that stretch reads GGR.

This sequence belongs to the aerobic coproporphyrinogen-III oxidase family. As to quaternary structure, homodimer. It depends on Mn(2+) as a cofactor.

The protein resides in the cytoplasm. It carries out the reaction coproporphyrinogen III + O2 + 2 H(+) = protoporphyrinogen IX + 2 CO2 + 2 H2O. It functions in the pathway porphyrin-containing compound metabolism; protoporphyrin-IX biosynthesis; protoporphyrinogen-IX from coproporphyrinogen-III (O2 route): step 1/1. Its function is as follows. Involved in the heme biosynthesis. Catalyzes the aerobic oxidative decarboxylation of propionate groups of rings A and B of coproporphyrinogen-III to yield the vinyl groups in protoporphyrinogen-IX. This chain is Oxygen-dependent coproporphyrinogen-III oxidase, found in Escherichia coli O8 (strain IAI1).